Reading from the N-terminus, the 87-residue chain is Small ribosomal subunit protein bS20 (87 aa).

Belongs to the bacterial ribosomal protein bS20 family.

In terms of biological role, binds directly to 16S ribosomal RNA. In Sphingopyxis alaskensis (strain DSM 13593 / LMG 18877 / RB2256) (Sphingomonas alaskensis), this protein is Small ribosomal subunit protein bS20.